The primary structure comprises 296 residues: GTPase Era (296 aa).

The Era-type G domain occupies 3–170; that stretch reads KSGFVTIVGR…KELMFKYIPE (168 aa). Residues 11–18 form a G1 region; the sequence is GRPNVGKS. Residue 11–18 participates in GTP binding; the sequence is GRPNVGKS. The G2 stretch occupies residues 37–41; sequence QTTRN. The tract at residues 58 to 61 is G3; the sequence is DTPG. GTP is bound by residues 58–62 and 120–123; these read DTPGI and NKID. The interval 120–123 is G4; the sequence is NKID. The tract at residues 149 to 151 is G5; the sequence is ISA. Residues 201–278 enclose the KH type-2 domain; that stretch reads LSEEVPHGIA…YIRLWVKVKE (78 aa).

This sequence belongs to the TRAFAC class TrmE-Era-EngA-EngB-Septin-like GTPase superfamily. Era GTPase family. In terms of assembly, monomer.

It is found in the cytoplasm. Its subcellular location is the cell membrane. In terms of biological role, an essential GTPase that binds both GDP and GTP, with rapid nucleotide exchange. Plays a role in 16S rRNA processing and 30S ribosomal subunit biogenesis and possibly also in cell cycle regulation and energy metabolism. The protein is GTPase Era of Clostridium botulinum (strain Kyoto / Type A2).